A 528-amino-acid polypeptide reads, in one-letter code: Na(+)/H(+) antiporter NhaB (528 aa).

11 consecutive transmembrane segments (helical) span residues 23–45 (FAILSFLAINPILFYLNPFIAGW), 66–86 (PGGLLAIEAVIIGMTSPTQVL), 95–115 (VLLLLVFMVAGIYFMKQLLLY), 130–164 (VSMLFCIASAFLSAFLDALTVIAVIITVAVGFYSI), 203–223 (LLMHAGVGTALGGVCTMVGEP), 241–261 (IRMSPVTVPVFFAGILTCFIV), 310–330 (LIVGLAFHLASVGLIGLSVII), 349–369 (EEALPFTALLAVFFAVVGVII), 390–410 (LVIFYIANGLLSMVSDNVFVG), 448–468 (ATPNGQAAFLFLLTSALAPLI), and 475–495 (MVMMALPYTIVLSIVGILAIE).

Belongs to the NhaB Na(+)/H(+) (TC 2.A.34) antiporter family.

Its subcellular location is the cell inner membrane. It carries out the reaction 2 Na(+)(in) + 3 H(+)(out) = 2 Na(+)(out) + 3 H(+)(in). Na(+)/H(+) antiporter that extrudes sodium in exchange for external protons. In Shewanella amazonensis (strain ATCC BAA-1098 / SB2B), this protein is Na(+)/H(+) antiporter NhaB.